The following is a 259-amino-acid chain: MADILKIGKYEFTSRLIVGSGKYPDFKTTYDATIASGAQMITVAVRRVNITDPNKENLMDYFKDSDVQLLPNSAGCTTAEEAITLFRMVREATGIDIIKLEIIGDTEKTLYPDVIETIKACEVLANDGFTVMAYTNDDPITAKKLENAGAAAVMPLAAPIGSGLGIQNRYNVVFVKEAVNVPVIVDAGVGCASDAAIAMELGADGVLTNTAIAQAKNPIQMAEAMKYAVIAGRMSYLAGRIPKKPYATASSPSEGMIQF.

Lysine 99 serves as the catalytic Schiff-base intermediate with DXP. 1-deoxy-D-xylulose 5-phosphate-binding positions include glycine 161, 187–188, and 209–210; these read AG and NT.

Belongs to the ThiG family. In terms of assembly, homotetramer. Forms heterodimers with either ThiH or ThiS.

It is found in the cytoplasm. The catalysed reaction is [ThiS sulfur-carrier protein]-C-terminal-Gly-aminoethanethioate + 2-iminoacetate + 1-deoxy-D-xylulose 5-phosphate = [ThiS sulfur-carrier protein]-C-terminal Gly-Gly + 2-[(2R,5Z)-2-carboxy-4-methylthiazol-5(2H)-ylidene]ethyl phosphate + 2 H2O + H(+). The protein operates within cofactor biosynthesis; thiamine diphosphate biosynthesis. Catalyzes the rearrangement of 1-deoxy-D-xylulose 5-phosphate (DXP) to produce the thiazole phosphate moiety of thiamine. Sulfur is provided by the thiocarboxylate moiety of the carrier protein ThiS. In vitro, sulfur can be provided by H(2)S. The polypeptide is Thiazole synthase (Nitratiruptor sp. (strain SB155-2)).